We begin with the raw amino-acid sequence, 55 residues long: Sec-independent protein translocase protein TatA (55 aa).

The chain crosses the membrane as a helical span at residues 1 to 21; the sequence is MSLGPWQLFLVLIIILVLFGA.

Belongs to the TatA/E family. As to quaternary structure, the Tat system comprises two distinct complexes: a TatABC complex, containing multiple copies of TatA, TatB and TatC subunits, and a separate TatA complex, containing only TatA subunits. Substrates initially bind to the TatABC complex, which probably triggers association of the separate TatA complex to form the active translocon.

The protein localises to the cell membrane. Functionally, part of the twin-arginine translocation (Tat) system that transports large folded proteins containing a characteristic twin-arginine motif in their signal peptide across membranes. TatA could form the protein-conducting channel of the Tat system. The protein is Sec-independent protein translocase protein TatA of Wolbachia pipientis wMel.